Reading from the N-terminus, the 77-residue chain is U8-lycotoxin-Ls1h (77 aa).

A signal peptide spans 1 to 20 (MKLIIFTGLVLFAIVSLIEV). Residues 21 to 26 (QADNER) constitute a propeptide that is removed on maturation.

This sequence belongs to the neurotoxin 19 (CSTX) family. 08 (U8-Lctx) subfamily. Contains 4 disulfide bonds. As to expression, expressed by the venom gland.

The protein localises to the secreted. This chain is U8-lycotoxin-Ls1h, found in Lycosa singoriensis (Wolf spider).